A 31-amino-acid polypeptide reads, in one-letter code: Cyclotide mden-N (31 aa).

The cyclopeptide (Gly-Asn) cross-link spans 1–31 (GTIPCGESCVYIPCLTSALGCSCKNKVCYRN). 3 cysteine pairs are disulfide-bonded: cysteine 5-cysteine 21, cysteine 9-cysteine 23, and cysteine 14-cysteine 28.

This sequence belongs to the cyclotide family. Bracelet subfamily. In terms of processing, this is a cyclic peptide.

In terms of biological role, probably participates in a plant defense mechanism. This chain is Cyclotide mden-N, found in Melicytus dentatus (Tree violet).